The following is a 458-amino-acid chain: Lysine-rich nucleolar protein 1 (458 aa).

Residues 1-14 (MITKTHKVDLGLPE) are compositionally biased toward basic and acidic residues. The tract at residues 1-21 (MITKTHKVDLGLPEKKKKKKV) is disordered. Residue Lys-7 forms a Glycyl lysine isopeptide (Lys-Gly) (interchain with G-Cter in SUMO2) linkage. Phosphoserine occurs at positions 42 and 50. The tract at residues 46–305 (ATSPSKSVAH…ESGVAGDPWK (260 aa)) is disordered. Over residues 64-73 (VKKKKKKKKG) the composition is skewed to basic residues. Lys-101 participates in a covalent cross-link: Glycyl lysine isopeptide (Lys-Gly) (interchain with G-Cter in SUMO2). Ser-111 carries the post-translational modification Phosphoserine. Lys-130 participates in a covalent cross-link: Glycyl lysine isopeptide (Lys-Gly) (interchain with G-Cter in SUMO2). The residue at position 132 (Ser-132) is a Phosphoserine. The segment covering 145–155 (GKKLKKHKKEK) has biased composition (basic residues). Residues 173-192 (EAREARDVGDTCSVGKKDEE) show a composition bias toward basic and acidic residues. The span at 198-218 (QKRKRKSPREHNGKVKKKKKI) shows a compositional bias: basic residues. Lys-249 is covalently cross-linked (Glycyl lysine isopeptide (Lys-Gly) (interchain with G-Cter in SUMO1); alternate). Residue Lys-249 forms a Glycyl lysine isopeptide (Lys-Gly) (interchain with G-Cter in SUMO2); alternate linkage. Ser-265 is modified (phosphoserine). Residues 265 to 274 (SAKKKMKSKK) show a composition bias toward basic residues. Glycyl lysine isopeptide (Lys-Gly) (interchain with G-Cter in SUMO2) cross-links involve residues Lys-275, Lys-287, and Lys-305. Residues 306–458 (EETDTDLEVV…NASKSVKLED (153 aa)) are interaction with ZNF106. 2 positions are modified to phosphothreonine: Thr-308 and Thr-310. Glycyl lysine isopeptide (Lys-Gly) (interchain with G-Cter in SUMO2) cross-links involve residues Lys-319, Lys-353, Lys-373, Lys-375, and Lys-407. A compositionally biased stretch (basic and acidic residues) spans 336–353 (QEEIDRESGKTEASETRK). A disordered region spans residues 336–355 (QEEIDRESGKTEASETRKWT). Arg-430 bears the Omega-N-methylarginine mark. Lys-442 participates in a covalent cross-link: Glycyl lysine isopeptide (Lys-Gly) (interchain with G-Cter in SUMO2).

As to quaternary structure, interacts with ZNF106.

The protein localises to the nucleus. It is found in the nucleolus. The chain is Lysine-rich nucleolar protein 1 (KNOP1) from Homo sapiens (Human).